The sequence spans 442 residues: Hydroxycinnamoyltransferase 2 (442 aa).

Catalysis depends on proton acceptor residues H159 and D389.

It belongs to the plant acyltransferase family. Expressed in roots and leaves. Expressed at low levels in stems and seeds.

In terms of biological role, hydroxycinnamoyl transferase that catalyzes the transfer of an acyl from p-coumaryol-CoA to various acyl acceptors. Can use feruloyl-CoA and caffeoyl-CoA as acyl donors. The protein is Hydroxycinnamoyltransferase 2 of Oryza sativa subsp. japonica (Rice).